The sequence spans 198 residues: MSQPVVVIDAKDHLLGRLASTIAKQVLNGQKIVVVRAEALNISGEFFRNKLKYHDFLRKATAFNKTRGPFHFRAPSRILYKAIRGMVSHKTARGKAALERLKIFEGIPPPYDKKKRVVVPQALRVLRLKPGRKYTTLGKLSTSVGWKYEDVVAKLEDKRKVRSAEYYAKKRAFTKKVSSASAAASESDVAKQLASFGY.

An N-acetylserine; partial modification is found at Ser-2. Residue Ser-43 is modified to Phosphoserine. Lys-176 is covalently cross-linked (Glycyl lysine isopeptide (Lys-Gly) (interchain with G-Cter in ubiquitin)). A phosphoserine mark is found at Ser-181, Ser-185, and Ser-187.

Belongs to the universal ribosomal protein uL13 family. In terms of assembly, component of the large ribosomal subunit (LSU). Mature yeast ribosomes consist of a small (40S) and a large (60S) subunit. The 40S small subunit contains 1 molecule of ribosomal RNA (18S rRNA) and 33 different proteins (encoded by 57 genes). The large 60S subunit contains 3 rRNA molecules (25S, 5.8S and 5S rRNA) and 46 different proteins (encoded by 81 genes). In terms of processing, N-terminally acetylated by acetyltransferase NatA.

It localises to the cytoplasm. Component of the ribosome, a large ribonucleoprotein complex responsible for the synthesis of proteins in the cell. The small ribosomal subunit (SSU) binds messenger RNAs (mRNAs) and translates the encoded message by selecting cognate aminoacyl-transfer RNA (tRNA) molecules. The large subunit (LSU) contains the ribosomal catalytic site termed the peptidyl transferase center (PTC), which catalyzes the formation of peptide bonds, thereby polymerizing the amino acids delivered by tRNAs into a polypeptide chain. The nascent polypeptides leave the ribosome through a tunnel in the LSU and interact with protein factors that function in enzymatic processing, targeting, and the membrane insertion of nascent chains at the exit of the ribosomal tunnel. The sequence is that of Large ribosomal subunit protein uL13B from Saccharomyces cerevisiae (strain ATCC 204508 / S288c) (Baker's yeast).